The primary structure comprises 211 residues: N-(5'-phosphoribosyl)anthranilate isomerase (211 aa).

It belongs to the TrpF family.

The enzyme catalyses N-(5-phospho-beta-D-ribosyl)anthranilate = 1-(2-carboxyphenylamino)-1-deoxy-D-ribulose 5-phosphate. It functions in the pathway amino-acid biosynthesis; L-tryptophan biosynthesis; L-tryptophan from chorismate: step 3/5. This Desulfovibrio desulfuricans (strain ATCC 27774 / DSM 6949 / MB) protein is N-(5'-phosphoribosyl)anthranilate isomerase.